Reading from the N-terminus, the 469-residue chain is Putative dipeptidase SAB1611c (469 aa).

Histidine 84 contributes to the Zn(2+) binding site. Residue aspartate 86 is part of the active site. Residue aspartate 115 participates in Zn(2+) binding. Residue glutamate 149 is the Proton acceptor of the active site. Zn(2+) is bound by residues glutamate 150, aspartate 173, and histidine 440.

The protein belongs to the peptidase M20A family. Zn(2+) is required as a cofactor.

The polypeptide is Putative dipeptidase SAB1611c (Staphylococcus aureus (strain bovine RF122 / ET3-1)).